Here is a 145-residue protein sequence, read N- to C-terminus: Flagellar assembly factor FliW (145 aa).

This sequence belongs to the FliW family. Interacts with translational regulator CsrA and flagellin(s).

The protein localises to the cytoplasm. Functionally, acts as an anti-CsrA protein, binds CsrA and prevents it from repressing translation of its target genes, one of which is flagellin. Binds to flagellin and participates in the assembly of the flagellum. The polypeptide is Flagellar assembly factor FliW (Clostridium tetani (strain Massachusetts / E88)).